We begin with the raw amino-acid sequence, 645 residues long: UvrABC system protein B (645 aa).

In terms of domain architecture, Helicase ATP-binding spans 24–414 (AGLNDNKRDQ…LFVEQVIRPT (391 aa)). 37 to 44 (GVTGSGKT) provides a ligand contact to ATP. A Beta-hairpin motif is present at residues 90-113 (YYDYYQPEAYLPQTDTYIEKDSVI). The region spanning 426–591 (AEAQVYDVVH…VLPKTIIKPI (166 aa)) is the Helicase C-terminal domain. In terms of domain architecture, UVR spans 610 to 645 (KDTVSSLRKQMLAHAKNLEFEEAAKIKNIIGRINNL).

The protein belongs to the UvrB family. In terms of assembly, forms a heterotetramer with UvrA during the search for lesions. Interacts with UvrC in an incision complex.

The protein localises to the cytoplasm. The UvrABC repair system catalyzes the recognition and processing of DNA lesions. A damage recognition complex composed of 2 UvrA and 2 UvrB subunits scans DNA for abnormalities. Upon binding of the UvrA(2)B(2) complex to a putative damaged site, the DNA wraps around one UvrB monomer. DNA wrap is dependent on ATP binding by UvrB and probably causes local melting of the DNA helix, facilitating insertion of UvrB beta-hairpin between the DNA strands. Then UvrB probes one DNA strand for the presence of a lesion. If a lesion is found the UvrA subunits dissociate and the UvrB-DNA preincision complex is formed. This complex is subsequently bound by UvrC and the second UvrB is released. If no lesion is found, the DNA wraps around the other UvrB subunit that will check the other stand for damage. This Wolbachia sp. subsp. Brugia malayi (strain TRS) protein is UvrABC system protein B.